The sequence spans 302 residues: Ribosomal RNA small subunit methyltransferase A (302 aa).

Residues Asn-27, Leu-29, Gly-54, Glu-75, Asp-100, and Asn-138 each coordinate S-adenosyl-L-methionine.

It belongs to the class I-like SAM-binding methyltransferase superfamily. rRNA adenine N(6)-methyltransferase family. RsmA subfamily.

It is found in the cytoplasm. The catalysed reaction is adenosine(1518)/adenosine(1519) in 16S rRNA + 4 S-adenosyl-L-methionine = N(6)-dimethyladenosine(1518)/N(6)-dimethyladenosine(1519) in 16S rRNA + 4 S-adenosyl-L-homocysteine + 4 H(+). Functionally, specifically dimethylates two adjacent adenosines (A1518 and A1519) in the loop of a conserved hairpin near the 3'-end of 16S rRNA in the 30S particle. May play a critical role in biogenesis of 30S subunits. This is Ribosomal RNA small subunit methyltransferase A from Natranaerobius thermophilus (strain ATCC BAA-1301 / DSM 18059 / JW/NM-WN-LF).